The chain runs to 294 residues: NAD kinase (294 aa).

D72 serves as the catalytic Proton acceptor. Residues 72–73, 146–147, R157, R174, D176, 187–192, and Q247 contribute to the NAD(+) site; these read DG, ND, and TAYSLS.

This sequence belongs to the NAD kinase family. The cofactor is a divalent metal cation.

Its subcellular location is the cytoplasm. The catalysed reaction is NAD(+) + ATP = ADP + NADP(+) + H(+). In terms of biological role, involved in the regulation of the intracellular balance of NAD and NADP, and is a key enzyme in the biosynthesis of NADP. Catalyzes specifically the phosphorylation on 2'-hydroxyl of the adenosine moiety of NAD to yield NADP. In Marinobacter nauticus (strain ATCC 700491 / DSM 11845 / VT8) (Marinobacter aquaeolei), this protein is NAD kinase.